Consider the following 361-residue polypeptide: Glycerophosphodiester phosphodiesterase GDPD1, chloroplastic (361 aa).

Residues 1–53 (MSLKAIHVSEVPSLDHFPENPSLICSSRKANNKFVVVGHRGHGMNMSQSPDLR) constitute a chloroplast transit peptide. In terms of domain architecture, GP-PDE spans 54-323 (FSALKENSIL…DHVEEITEAV (270 aa)).

The protein belongs to the glycerophosphoryl diester phosphodiesterase family. It depends on Mg(2+) as a cofactor. As to expression, expressed in roots, shoots, rosette leaves, stems, flowers and siliques.

The protein localises to the plastid. It localises to the chloroplast. It carries out the reaction a sn-glycero-3-phosphodiester + H2O = an alcohol + sn-glycerol 3-phosphate + H(+). Hydrolyzes glycerolphosphoglycerol, glycerophosphocholine and glycerophosphoethanolamine in vitro. May be involved in release of inorganic phosphate (Pi) from phospholipids during Pi starvation. This is Glycerophosphodiester phosphodiesterase GDPD1, chloroplastic from Arabidopsis thaliana (Mouse-ear cress).